A 142-amino-acid polypeptide reads, in one-letter code: DNA-directed RNA polymerase subunit omega (142 aa).

Residues 93 to 142 are disordered; sequence AWSVPEAGGDEGGDASELLDDEGEGAAAGAEPDFSEMDVPLADLADEDKI. A compositionally biased stretch (acidic residues) spans 100-116; sequence GGDEGGDASELLDDEGE.

It belongs to the RNA polymerase subunit omega family. As to quaternary structure, the RNAP catalytic core consists of 2 alpha, 1 beta, 1 beta' and 1 omega subunit. When a sigma factor is associated with the core the holoenzyme is formed, which can initiate transcription.

The enzyme catalyses RNA(n) + a ribonucleoside 5'-triphosphate = RNA(n+1) + diphosphate. Its function is as follows. Promotes RNA polymerase assembly. Latches the N- and C-terminal regions of the beta' subunit thereby facilitating its interaction with the beta and alpha subunits. This is DNA-directed RNA polymerase subunit omega from Rhodospirillum centenum (strain ATCC 51521 / SW).